The following is a 388-amino-acid chain: Meiotic driver wtf13 (388 aa).

Over residues 1 to 29 (MKNKDYPLRSSMDELSTKNDNEIDLEKGP) the composition is skewed to basic and acidic residues. Residues 1–39 (MKNKDYPLRSSMDELSTKNDNEIDLEKGPLPEYNSEDGS) form a disordered region. 9 consecutive transmembrane segments (helical) span residues 89-109 (LLIS…CVNP), 119-139 (AFSV…FCFF), 152-172 (VTVI…AQCV), 182-202 (CVKV…VGLY), 207-227 (DLVV…FGCV), 243-263 (CSIS…IWTL), 267-287 (LFGL…TKGL), 297-317 (ATGY…LFFY), and 331-351 (FIGN…GGIG).

It belongs to the WTF family. In terms of assembly, homomer. Forms protein aggregates. The two isoforms can interact with each other and with themselves. High sequence similarity is required for their interaction.

Its subcellular location is the spore membrane. The protein localises to the vacuole membrane. It localises to the ascus epiplasm. It is found in the cytoplasm. The protein resides in the endoplasmic reticulum membrane. In terms of biological role, promotes unequal transmission of alleles from the parental zygote to progeny spores by acting as poison/antidote system where the poison and antidote proteins are produced from the same locus; the poison component is trans-acting and targets all spores within an ascus whereas the antidote component is spore-specific, leading to poisoning of all progeny that do not inherit the allele. Functionally, localizes isoform 2 to the vacuole thereby facilitating its degradation. In addition to suppressing isoform 2, also suppresses S.pombe strain FY29033 wtf18 isoform 2. Its function is as follows. Forms toxic aggregates that disrupt spore maturation. The chain is Meiotic driver wtf13 from Schizosaccharomyces pombe (strain 972 / ATCC 24843) (Fission yeast).